Reading from the N-terminus, the 151-residue chain is Transcriptional repressor NrdR (151 aa).

A zinc finger lies at 3–34 (CPYCGYIEDRVIDSRPTDEGSAIRRRRECSKC). Positions 49–139 (IMVIKKDKSR…VYRQFKDINT (91 aa)) constitute an ATP-cone domain.

The protein belongs to the NrdR family. It depends on Zn(2+) as a cofactor.

Functionally, negatively regulates transcription of bacterial ribonucleotide reductase nrd genes and operons by binding to NrdR-boxes. This chain is Transcriptional repressor NrdR, found in Acetivibrio thermocellus (strain ATCC 27405 / DSM 1237 / JCM 9322 / NBRC 103400 / NCIMB 10682 / NRRL B-4536 / VPI 7372) (Clostridium thermocellum).